The primary structure comprises 125 residues: Prefoldin subunit beta (125 aa).

Belongs to the prefoldin subunit beta family. As to quaternary structure, heterohexamer of two alpha and four beta subunits.

The protein localises to the cytoplasm. Its function is as follows. Molecular chaperone capable of stabilizing a range of proteins. Seems to fulfill an ATP-independent, HSP70-like function in archaeal de novo protein folding. The chain is Prefoldin subunit beta from Pyrobaculum calidifontis (strain DSM 21063 / JCM 11548 / VA1).